The following is a 217-amino-acid chain: Ribosomal RNA large subunit methyltransferase E (217 aa).

Residues G71, W73, D91, D107, and D132 each contribute to the S-adenosyl-L-methionine site. The active-site Proton acceptor is the K172.

This sequence belongs to the class I-like SAM-binding methyltransferase superfamily. RNA methyltransferase RlmE family.

It is found in the cytoplasm. The enzyme catalyses uridine(2552) in 23S rRNA + S-adenosyl-L-methionine = 2'-O-methyluridine(2552) in 23S rRNA + S-adenosyl-L-homocysteine + H(+). Its function is as follows. Specifically methylates the uridine in position 2552 of 23S rRNA at the 2'-O position of the ribose in the fully assembled 50S ribosomal subunit. This Psychromonas ingrahamii (strain DSM 17664 / CCUG 51855 / 37) protein is Ribosomal RNA large subunit methyltransferase E.